Reading from the N-terminus, the 490-residue chain is Probable cytosol aminopeptidase (490 aa).

Lys257 and Asp262 together coordinate Mn(2+). Lys269 is a catalytic residue. Residues Asp281, Asp341, and Glu343 each contribute to the Mn(2+) site. Arg345 is a catalytic residue.

The protein belongs to the peptidase M17 family. The cofactor is Mn(2+).

It is found in the cytoplasm. It catalyses the reaction Release of an N-terminal amino acid, Xaa-|-Yaa-, in which Xaa is preferably Leu, but may be other amino acids including Pro although not Arg or Lys, and Yaa may be Pro. Amino acid amides and methyl esters are also readily hydrolyzed, but rates on arylamides are exceedingly low.. The catalysed reaction is Release of an N-terminal amino acid, preferentially leucine, but not glutamic or aspartic acids.. In terms of biological role, presumably involved in the processing and regular turnover of intracellular proteins. Catalyzes the removal of unsubstituted N-terminal amino acids from various peptides. The protein is Probable cytosol aminopeptidase of Prochlorococcus marinus (strain MIT 9312).